Reading from the N-terminus, the 207-residue chain is Dephospho-CoA kinase (207 aa).

The DPCK domain occupies 5-202 (VVGLTGGIGS…LQYLKLSAEK (198 aa)). 13 to 18 (GSGKST) lines the ATP pocket.

The protein belongs to the CoaE family.

It is found in the cytoplasm. The enzyme catalyses 3'-dephospho-CoA + ATP = ADP + CoA + H(+). The protein operates within cofactor biosynthesis; coenzyme A biosynthesis; CoA from (R)-pantothenate: step 5/5. Its function is as follows. Catalyzes the phosphorylation of the 3'-hydroxyl group of dephosphocoenzyme A to form coenzyme A. This is Dephospho-CoA kinase from Dechloromonas aromatica (strain RCB).